Here is a 160-residue protein sequence, read N- to C-terminus: Transcriptional repressor NrdR (160 aa).

A zinc finger spans residues 3 to 34 (CPSCQNTDSRVLESRAADGGRSVRRRRECLNC). One can recognise an ATP-cone domain in the interval 49-139 (ITVIKRNGNR…VYRQFRGIDD (91 aa)).

This sequence belongs to the NrdR family. The cofactor is Zn(2+).

Its function is as follows. Negatively regulates transcription of bacterial ribonucleotide reductase nrd genes and operons by binding to NrdR-boxes. The polypeptide is Transcriptional repressor NrdR (Synechococcus sp. (strain CC9605)).